We begin with the raw amino-acid sequence, 77 residues long: Acyl carrier protein (77 aa).

The Carrier domain occupies 2–77; sequence ADVLERVTKI…DAVTYIESHL (76 aa). Ser37 bears the O-(pantetheine 4'-phosphoryl)serine mark.

Belongs to the acyl carrier protein (ACP) family. Post-translationally, 4'-phosphopantetheine is transferred from CoA to a specific serine of apo-ACP by AcpS. This modification is essential for activity because fatty acids are bound in thioester linkage to the sulfhydryl of the prosthetic group.

The protein resides in the cytoplasm. It participates in lipid metabolism; fatty acid biosynthesis. Carrier of the growing fatty acid chain in fatty acid biosynthesis. This chain is Acyl carrier protein, found in Bacillus anthracis (strain A0248).